Reading from the N-terminus, the 61-residue chain is Temporin-CG3 (61 aa).

The signal sequence occupies residues 1-22 (MFTMKKPLLLLFFLATINLSLC). The propeptide at 23–44 (EQERNAEEERRDEPDERNAEVE) is removed in mature form.

It belongs to the frog skin active peptide (FSAP) family. Temporin subfamily. Expressed by the skin glands.

It localises to the secreted. Antimicrobial peptide active against a variety of Gram-positive bacterial strains but not against Gram-negative bacteria. Has weak antifungal activity against a slime mold isolate. Has weak hemolytic activity against human erythrocytes. This is Temporin-CG3 from Amolops chunganensis (Chungan torrent frog).